A 398-amino-acid chain; its full sequence is 1-deoxy-D-xylulose 5-phosphate reductoisomerase (398 aa).

The NADPH site is built by Thr-10, Gly-11, Ser-12, Ile-13, Lys-37, Asn-38, and Asn-124. 1-deoxy-D-xylulose 5-phosphate is bound at residue Lys-125. Glu-126 is an NADPH binding site. Asp-150 contributes to the Mn(2+) binding site. 4 residues coordinate 1-deoxy-D-xylulose 5-phosphate: Ser-151, Glu-152, Ser-186, and His-209. Position 152 (Glu-152) interacts with Mn(2+). Gly-215 is a binding site for NADPH. Positions 222, 227, 228, and 231 each coordinate 1-deoxy-D-xylulose 5-phosphate. Residue Glu-231 participates in Mn(2+) binding.

This sequence belongs to the DXR family. As to quaternary structure, homodimer. The cofactor is Mg(2+). Mn(2+) serves as cofactor.

The enzyme catalyses 2-C-methyl-D-erythritol 4-phosphate + NADP(+) = 1-deoxy-D-xylulose 5-phosphate + NADPH + H(+). It participates in isoprenoid biosynthesis; isopentenyl diphosphate biosynthesis via DXP pathway; isopentenyl diphosphate from 1-deoxy-D-xylulose 5-phosphate: step 1/6. In terms of biological role, catalyzes the NADPH-dependent rearrangement and reduction of 1-deoxy-D-xylulose-5-phosphate (DXP) to 2-C-methyl-D-erythritol 4-phosphate (MEP). This chain is 1-deoxy-D-xylulose 5-phosphate reductoisomerase, found in Buchnera aphidicola subsp. Acyrthosiphon pisum (strain APS) (Acyrthosiphon pisum symbiotic bacterium).